Here is a 288-residue protein sequence, read N- to C-terminus: Eukaryotic translation initiation factor 3 subunit G (288 aa).

2 disordered regions span residues 1 to 33 (MSKLGNRADWADDEEFDDPSALPPQQITTNKDG) and 156 to 197 (DEPT…GGER). An RRM domain is found at 208–286 (ATLRVTNVSE…LILRVEFAKR (79 aa)).

Belongs to the eIF-3 subunit G family. As to quaternary structure, component of the eukaryotic translation initiation factor 3 (eIF-3) complex.

The protein localises to the cytoplasm. Functionally, RNA-binding component of the eukaryotic translation initiation factor 3 (eIF-3) complex, which is involved in protein synthesis of a specialized repertoire of mRNAs and, together with other initiation factors, stimulates binding of mRNA and methionyl-tRNAi to the 40S ribosome. The eIF-3 complex specifically targets and initiates translation of a subset of mRNAs involved in cell proliferation. This subunit can bind 18S rRNA. The sequence is that of Eukaryotic translation initiation factor 3 subunit G (tif35) from Aspergillus niger (strain ATCC MYA-4892 / CBS 513.88 / FGSC A1513).